Reading from the N-terminus, the 96-residue chain is Neurotoxin beta-KTx 31.1 (96 aa).

Residues 1–21 (MQAKRTILLLLLLGMVALSSC) form the signal peptide. Residues 22-29 (GLREKHVQ) constitute a propeptide that is removed on maturation. Residues 56–93 (QYGCPIIKDYCSFHCNDLEKHEGYCHGTKCKCNIPNQY) form the BetaSPN-type CS-alpha/beta domain. 3 cysteine pairs are disulfide-bonded: cysteine 59–cysteine 80, cysteine 66–cysteine 85, and cysteine 70–cysteine 87.

This sequence belongs to the long chain scorpion toxin family. Class 1 subfamily. Expressed by the venom gland.

It localises to the secreted. Functionally, inhibits voltage-gated potassium channel. The protein is Neurotoxin beta-KTx 31.1 of Lychas mucronatus (Chinese swimming scorpion).